We begin with the raw amino-acid sequence, 374 residues long: Chaperone protein DnaJ (374 aa).

In terms of domain architecture, J spans 6 to 71 (DYYAVLEVTR…QKRAAYDRFG (66 aa)). The CR-type zinc-finger motif lies at 130–209 (GVKKPITVPT…CHGAGTVERE (80 aa)). Residues Cys-143, Cys-146, Cys-161, Cys-164, Cys-183, Cys-186, Cys-197, and Cys-200 each contribute to the Zn(2+) site. CXXCXGXG motif repeat units lie at residues 143–150 (CESCEGTG), 161–168 (CPTCHGAG), 183–190 (CPTCHGAG), and 197–204 (CAACHGAG).

This sequence belongs to the DnaJ family. Homodimer. The cofactor is Zn(2+).

It is found in the cytoplasm. In terms of biological role, participates actively in the response to hyperosmotic and heat shock by preventing the aggregation of stress-denatured proteins and by disaggregating proteins, also in an autonomous, DnaK-independent fashion. Unfolded proteins bind initially to DnaJ; upon interaction with the DnaJ-bound protein, DnaK hydrolyzes its bound ATP, resulting in the formation of a stable complex. GrpE releases ADP from DnaK; ATP binding to DnaK triggers the release of the substrate protein, thus completing the reaction cycle. Several rounds of ATP-dependent interactions between DnaJ, DnaK and GrpE are required for fully efficient folding. Also involved, together with DnaK and GrpE, in the DNA replication of plasmids through activation of initiation proteins. In Gluconacetobacter diazotrophicus (strain ATCC 49037 / DSM 5601 / CCUG 37298 / CIP 103539 / LMG 7603 / PAl5), this protein is Chaperone protein DnaJ.